Reading from the N-terminus, the 179-residue chain is Transthyretin-like protein 46 (179 aa).

Positions 1–17 are cleaved as a signal peptide; the sequence is MNKLFVLLIALLGLTAA. The disordered stretch occupies residues 144 to 179; that stretch reads RRGGFNADYMDPDNSEKDQSKSSEESEDKEKTVETF. Residues 157–179 are compositionally biased toward basic and acidic residues; sequence NSEKDQSKSSEESEDKEKTVETF.

Belongs to the nematode transthyretin-like family.

Its subcellular location is the secreted. The chain is Transthyretin-like protein 46 (ttr-46) from Caenorhabditis elegans.